Consider the following 37-residue polypeptide: Large ribosomal subunit protein bL36c (37 aa).

It belongs to the bacterial ribosomal protein bL36 family.

Its subcellular location is the plastid. It localises to the chloroplast. The sequence is that of Large ribosomal subunit protein bL36c from Phaeodactylum tricornutum (strain CCAP 1055/1).